The chain runs to 67 residues: uncharacterized protein (67 aa).

This is an uncharacterized protein from Archaeoglobus fulgidus (strain ATCC 49558 / DSM 4304 / JCM 9628 / NBRC 100126 / VC-16).